Here is a 1076-residue protein sequence, read N- to C-terminus: Guanylyl cyclase C (1076 aa).

The signal sequence occupies residues 1–23 (MKSPLLGLVVWSLLLQLLQPGLA). At 24–433 (FWNSQISQNC…PHDIPGLGPH (410 aa)) the chain is on the extracellular side. N-linked (GlcNAc...) asparagine glycans are attached at residues asparagine 35, asparagine 82, asparagine 191, asparagine 198, asparagine 287, asparagine 306, asparagine 310, asparagine 348, and asparagine 405. The chain crosses the membrane as a helical span at residues 434–457 (ILLIAVCTLAGVVVLILLIALLVL). Topologically, residues 458–1076 (RKYKKDNELR…NTTDQDSTYF (619 aa)) are cytoplasmic. Residues 492–752 (LKIDDDKKRD…KIENTLAKIF (261 aa)) enclose the Protein kinase domain. The 131-residue stretch at 827 to 957 (TVYFSDIVGF…DTVNTASRME (131 aa)) folds into the Guanylate cyclase domain.

It belongs to the adenylyl cyclase class-4/guanylyl cyclase family. Homotrimer. Interacts via its C-terminal region with NHERF4. Interacts with the lectin chaperone VIP36. Glycosylation at Asn-62 is required for interaction with VIP36 while glycosylation at Asn-348 and Asn-405 modulates ligand-mediated GC-C activation.

The protein resides in the cell membrane. It localises to the endoplasmic reticulum membrane. The catalysed reaction is GTP = 3',5'-cyclic GMP + diphosphate. Functionally, guanylyl cyclase that catalyzes synthesis of cyclic GMP (cGMP) from GTP. This chain is Guanylyl cyclase C (GUCY2C), found in Cavia porcellus (Guinea pig).